The following is a 444-amino-acid chain: Tubulin beta-9 chain (444 aa).

The GTP site is built by Q11, E69, S138, G142, T143, G144, N204, and N226. E69 lines the Mg(2+) pocket.

The protein belongs to the tubulin family. In terms of assembly, dimer of alpha and beta chains. A typical microtubule is a hollow water-filled tube with an outer diameter of 25 nm and an inner diameter of 15 nM. Alpha-beta heterodimers associate head-to-tail to form protofilaments running lengthwise along the microtubule wall with the beta-tubulin subunit facing the microtubule plus end conferring a structural polarity. Microtubules usually have 13 protofilaments but different protofilament numbers can be found in some organisms and specialized cells. Interacts with TFCA. Mg(2+) serves as cofactor.

The protein localises to the cytoplasm. Its subcellular location is the cytoskeleton. Functionally, tubulin is the major constituent of microtubules, a cylinder consisting of laterally associated linear protofilaments composed of alpha- and beta-tubulin heterodimers. Microtubules grow by the addition of GTP-tubulin dimers to the microtubule end, where a stabilizing cap forms. Below the cap, tubulin dimers are in GDP-bound state, owing to GTPase activity of alpha-tubulin. This chain is Tubulin beta-9 chain (TUBB9), found in Arabidopsis thaliana (Mouse-ear cress).